The primary structure comprises 340 residues: Methionine import ATP-binding protein MetN (340 aa).

Residues 2–241 (IRIENLTKIY…PQSSVAKEFI (240 aa)) form the ABC transporter domain. Residue 38–45 (GLSGAGKS) participates in ATP binding.

It belongs to the ABC transporter superfamily. Methionine importer (TC 3.A.1.24) family. The complex is composed of two ATP-binding proteins (MetN), two transmembrane proteins (MetI) and a solute-binding protein (MetQ).

The protein localises to the cell membrane. The enzyme catalyses L-methionine(out) + ATP + H2O = L-methionine(in) + ADP + phosphate + H(+). It catalyses the reaction D-methionine(out) + ATP + H2O = D-methionine(in) + ADP + phosphate + H(+). In terms of biological role, part of the ABC transporter complex MetNIQ involved in methionine import. Responsible for energy coupling to the transport system. The sequence is that of Methionine import ATP-binding protein MetN from Desulfitobacterium hafniense (strain Y51).